The chain runs to 130 residues: Protachykinin-1 (130 aa).

Positions 1 to 19 (MKILVAVAVIFFISTQLSA) are cleaved as a signal peptide. The propeptide occupies 20-56 (EEIGANDDFNYWSDWSDSDQIKEEMPEPFEHLLQRIA). A methionine amide mark is found at M68 and M107.

It belongs to the tachykinin family. Post-translationally, the substance P form is cleaved at Pro-59 by the prolyl endopeptidase FAP (seprase) activity (in vitro). Substance P is also cleaved and degraded by Angiotensin-converting enzyme (ACE) and neprilysin (MME).

Its subcellular location is the secreted. Its function is as follows. Tachykinins are active peptides which excite neurons, evoke behavioral responses, are potent vasodilators and secretagogues, and contract (directly or indirectly) many smooth muscles. This Bos taurus (Bovine) protein is Protachykinin-1 (TAC1).